The sequence spans 336 residues: N-acetyl-gamma-glutamyl-phosphate reductase (336 aa).

The active site involves cysteine 143.

This sequence belongs to the NAGSA dehydrogenase family. Type 1 subfamily.

Its subcellular location is the cytoplasm. The enzyme catalyses N-acetyl-L-glutamate 5-semialdehyde + phosphate + NADP(+) = N-acetyl-L-glutamyl 5-phosphate + NADPH + H(+). It functions in the pathway amino-acid biosynthesis; L-arginine biosynthesis; N(2)-acetyl-L-ornithine from L-glutamate: step 3/4. Catalyzes the NADPH-dependent reduction of N-acetyl-5-glutamyl phosphate to yield N-acetyl-L-glutamate 5-semialdehyde. This Dictyoglomus thermophilum (strain ATCC 35947 / DSM 3960 / H-6-12) protein is N-acetyl-gamma-glutamyl-phosphate reductase.